The following is a 598-amino-acid chain: MSSSDGKLRYDGRVAVVTGAGAGLGREYALLFAERGAKVVVNDLGGTHSGDGASQRAADIVVDEIRKAGGEAVADYNSVIDGAKVIETAIKAFGRVDILVNNAGILRDRSLVKTSEQDWNLVNDVHLKGSFKCTQAAFPYMKKQNYGRIIMTSSNSGIYGNFGQVNYTAAKMGLIGLANTVAIEGARNNVLCNVIVPTAASRMTEGILPDILFNELKPKLIAPVVAYLCHESCEDNGSYIESAAGWATKLHMVRGKGAVLRPSLDDPVTIEYVKDVWSNVTDMSKAKHLGAIAEASGTLLEVLEKLKEGGGDAIEDAFEFNSKELITYALGIGASVKNAKDMRFLYENDADFAAIPTFFVLPGLLLQMSTDKLLSKALPNSQVDFSNILHGEQYLEIVDDLPTSGTLLTNGKVFDVMDKGSGAVVVTNSESFDESGRLLVRNQSTTFIVGAGKFGGKKDPIAGVVPLQPAPNRQPDATVQYTTSEDQAALYRLSGDKNPLHIDPQMALLAGFKTPILHGLCTLGFSVRAVLAQFADNNPALFKAVKVRFSGPVIPGQTLRVDLWKQGTRINFRTVVVETGKEVISGAYVDLKSSQAKL.

The (3R)-hydroxyacyl-CoA dehydrogenase stretch occupies residues 1-309; that stretch reads MSSSDGKLRY…LEVLEKLKEG (309 aa). Residues 16 to 40, L24, D43, 78 to 79, and N102 each bind NAD(+); these read VVTG…AKVV and SV. S154 is a binding site for substrate. Y167 (proton acceptor) is an active-site residue. Residues 167-171 and 199-202 contribute to the NAD(+) site; these read YTAAK and AASR. The interval 310–598 is enoyl-CoA hydratase 2; that stretch reads GGDAIEDAFE…VDLKSSQAKL (289 aa). (3R)-3-hydroxydecanoyl-CoA contacts are provided by residues 390-391, K419, 496-501, G519, and F549; these read HG and DKNPLH. One can recognise a MaoC-like domain in the interval 469 to 586; that stretch reads PAPNRQPDAT…VETGKEVISG (118 aa). Positions 596-598 match the Microbody targeting signal motif; the sequence is AKL.

Belongs to the short-chain dehydrogenases/reductases (SDR) family. As to quaternary structure, homodimer.

It is found in the peroxisome. It catalyses the reaction a (3R)-3-hydroxyacyl-CoA + NAD(+) = a 3-oxoacyl-CoA + NADH + H(+). The enzyme catalyses a (3R)-3-hydroxyacyl-CoA = a (2E)-enoyl-CoA + H2O. Its pathway is lipid metabolism; fatty acid beta-oxidation. In terms of biological role, bifunctional enzyme acting on the peroxisomal beta-oxidation pathway for fatty acids. The polypeptide is Peroxisomal multifunctional enzyme type 2 (Drosophila melanogaster (Fruit fly)).